The chain runs to 1588 residues: Paternally-expressed gene 3 protein (1588 aa).

The 83-residue stretch at 46–128 (HQRFRNLIYV…TLLENYKEMY (83 aa)) folds into the SCAN box domain. Disordered regions lie at residues 128 to 230 (YQPE…ESYQ), 266 to 306 (DGHS…RRGI), and 319 to 349 (KFIK…MSDD). Positions 129–142 (QPEDDNNSDVTSDD) are enriched in acidic residues. Composition is skewed to basic and acidic residues over residues 143–152 (DMTRNRRESS), 161–182 (SGDR…DRWS), 206–225 (FEMD…RSQD), and 295–306 (PEAKKSTHRRGI). C2H2-type zinc fingers lie at residues 454–476 (YVCD…QIMH), 507–529 (FECK…RKIH), and 565–587 (YECR…QKIH). A compositionally biased stretch (basic and acidic residues) spans 588–607 (FGDDKDNEREHERERERGET). Residues 588-610 (FGDDKDNEREHERERERGETFRP) are disordered. Residues 627 to 649 (YECKVCGETFLHSSSLKEHQKIH) form a C2H2-type 4 zinc finger. A disordered region spans residues 838-930 (LVASKPPRSH…EFSVPSSNVR (93 aa)). Residues 868 to 881 (LNDKRQKIPARENP) are compositionally biased toward basic and acidic residues. Residues 969–991 (YECQECGECFAHSSDLTEHQKIH) form a C2H2-type 5 zinc finger. The interval 1056-1104 (EKSHGEESQGENTDGEETHSEETHGQETIEDPVIQGSDMEDPQKDDPDD) is disordered. The segment covering 1071–1082 (EETHSEETHGQE) has biased composition (basic and acidic residues). 5 C2H2-type zinc fingers span residues 1107-1129 (YECE…QKVH), 1163-1185 (YECP…QRIH), 1225-1247 (IRCL…MRLH), 1282-1304 (FECA…VTVH), and 1332-1354 (YECK…KELH). The span at 1395 to 1415 (AEPEVEAAEPEVEAAEPEVEA) shows a compositional bias: acidic residues. Residues 1395 to 1495 (AEPEVEAAEP…GIEDPEEGED (101 aa)) form a disordered region. 7 repeat units span residues 1397–1403 (PEVEAAE), 1404–1410 (PEVEAAE), 1411–1417 (PEVEAAE), 1418–1422 (PNGEA), 1425–1429 (PDGEA), 1432–1436 (PIGEA), and 1439–1443 (PNGEA). The segment at 1397-1417 (PEVEAAEPEVEAAEPEVEAAE) is 3 X 7 AA repeat of P-E-V-E-A-A-E. The tract at residues 1418-1443 (PNGEAEGPDGEAAEPIGEAGQPNGEA) is 4 X 5 AA repeat of P-X-G-E-A. Acidic residues-rich tracts occupy residues 1449–1466 (DADE…ERAE) and 1475–1495 (PEGD…EGED). 2 consecutive C2H2-type zinc fingers follow at residues 1505-1527 (YDCH…LKTH) and 1564-1586 (FKCD…QNTH).

Belongs to the krueppel C2H2-type zinc-finger protein family. As to quaternary structure, homodimer. Interacts with SIAH1A and SIAH2. Interacts with TRAF2.

It is found in the nucleus. The protein resides in the cytoplasm. Functionally, induces apoptosis in cooperation with SIAH1A. Acts as a mediator between p53/TP53 and BAX in a neuronal death pathway that is activated by DNA damage. Acts synergistically with TRAF2 and inhibits TNF induced apoptosis through activation of NF-kappa-B. This chain is Paternally-expressed gene 3 protein (PEG3), found in Pan troglodytes (Chimpanzee).